The primary structure comprises 527 residues: Peptide chain release factor 3 (527 aa).

In terms of domain architecture, tr-type G spans 9–277 (AKRRTFAIIS…AVVDWAPKPL (269 aa)). GTP-binding positions include 18-25 (SHPDAGKT), 86-90 (DTPGH), and 140-143 (NKLD).

Belongs to the TRAFAC class translation factor GTPase superfamily. Classic translation factor GTPase family. PrfC subfamily.

Its subcellular location is the cytoplasm. In terms of biological role, increases the formation of ribosomal termination complexes and stimulates activities of RF-1 and RF-2. It binds guanine nucleotides and has strong preference for UGA stop codons. It may interact directly with the ribosome. The stimulation of RF-1 and RF-2 is significantly reduced by GTP and GDP, but not by GMP. This Stutzerimonas stutzeri (strain A1501) (Pseudomonas stutzeri) protein is Peptide chain release factor 3.